The sequence spans 620 residues: Putative ribonuclease H protein At1g65750 (620 aa).

The RNase H type-1 domain occupies 456-586 (CVGWVKVNTD…ADGLANYAFS (131 aa)). 4 residues coordinate Mg(2+): Asp465, Glu505, Asp529, and Asp578.

Requires Mg(2+) as cofactor.

It catalyses the reaction Endonucleolytic cleavage to 5'-phosphomonoester.. The chain is Putative ribonuclease H protein At1g65750 from Arabidopsis thaliana (Mouse-ear cress).